The primary structure comprises 89 residues: RNA-binding protein Hfq (89 aa).

A Sm domain is found at 9 to 68 (DPFLNALRRERVPVSIYLVNGIKLQGQVESFDQFVILLKNTVSQMVYKHAISTVVPARAL).

This sequence belongs to the Hfq family. As to quaternary structure, homohexamer.

Functionally, RNA chaperone that binds small regulatory RNA (sRNAs) and mRNAs to facilitate mRNA translational regulation in response to envelope stress, environmental stress and changes in metabolite concentrations. Also binds with high specificity to tRNAs. The protein is RNA-binding protein Hfq of Shewanella denitrificans (strain OS217 / ATCC BAA-1090 / DSM 15013).